Here is a 72-residue protein sequence, read N- to C-terminus: MSKFSNFIINKPFSVINNAACHIFSRYLLENKHLFYQYFKISNTCIDHLEQLINVNFFSSDRTSFCECNRFP.

Functionally, probable trans-acting positive activator for the tdc operon. The polypeptide is Threonine dehydratase operon activator protein (tdcR) (Escherichia coli (strain K12)).